Consider the following 210-residue polypeptide: Pyridoxine/pyridoxamine 5'-phosphate oxidase (210 aa).

Substrate is bound by residues 7-10 (REDY) and lysine 65. FMN is bound by residues 60 to 65 (RMVLLK), 75 to 76 (FT), arginine 81, lysine 82, and glutamine 104. Substrate-binding residues include tyrosine 122, arginine 126, and serine 130. FMN contacts are provided by residues 139–140 (QS) and tryptophan 183. 189-191 (RLH) lines the substrate pocket. Arginine 193 lines the FMN pocket.

The protein belongs to the pyridoxamine 5'-phosphate oxidase family. In terms of assembly, homodimer. FMN is required as a cofactor.

The enzyme catalyses pyridoxamine 5'-phosphate + O2 + H2O = pyridoxal 5'-phosphate + H2O2 + NH4(+). It catalyses the reaction pyridoxine 5'-phosphate + O2 = pyridoxal 5'-phosphate + H2O2. The protein operates within cofactor metabolism; pyridoxal 5'-phosphate salvage; pyridoxal 5'-phosphate from pyridoxamine 5'-phosphate: step 1/1. It participates in cofactor metabolism; pyridoxal 5'-phosphate salvage; pyridoxal 5'-phosphate from pyridoxine 5'-phosphate: step 1/1. Functionally, catalyzes the oxidation of either pyridoxine 5'-phosphate (PNP) or pyridoxamine 5'-phosphate (PMP) into pyridoxal 5'-phosphate (PLP). This chain is Pyridoxine/pyridoxamine 5'-phosphate oxidase, found in Neisseria gonorrhoeae (strain ATCC 700825 / FA 1090).